A 673-amino-acid chain; its full sequence is Pesticin receptor (673 aa).

The first 22 residues, M1–A22, serve as a signal peptide directing secretion. The TonB box motif lies at S30–S37. The region spanning S41–Q155 is the TBDR plug domain. The TBDR beta-barrel domain maps to T160–F672. The TonB C-terminal box motif lies at Q657–F673.

The protein belongs to the TonB-dependent receptor family.

The protein localises to the cell outer membrane. Its function is as follows. Receptor for the bacteriocin pesticin and for the siderophore yersiniabactin. This chain is Pesticin receptor (fyuA), found in Yersinia pestis.